The following is a 234-amino-acid chain: Glucosamine-6-phosphate deaminase (234 aa).

Asp62 acts as the Proton acceptor; for enolization step in catalysis. Asn128 functions as the For ring-opening step in the catalytic mechanism. Residue His130 is the Proton acceptor; for ring-opening step of the active site. Glu135 functions as the For ring-opening step in the catalytic mechanism.

It belongs to the glucosamine/galactosamine-6-phosphate isomerase family. NagB subfamily.

It catalyses the reaction alpha-D-glucosamine 6-phosphate + H2O = beta-D-fructose 6-phosphate + NH4(+). Its pathway is amino-sugar metabolism; N-acetylneuraminate degradation; D-fructose 6-phosphate from N-acetylneuraminate: step 5/5. Catalyzes the reversible isomerization-deamination of glucosamine 6-phosphate (GlcN6P) to form fructose 6-phosphate (Fru6P) and ammonium ion. This Streptococcus uberis (strain ATCC BAA-854 / 0140J) protein is Glucosamine-6-phosphate deaminase.